The sequence spans 181 residues: Minor capsid protein P4 (181 aa).

As to quaternary structure, interacts with the major capsid protein.

The protein resides in the virion. Its function is as follows. One of the minor capsid proteins that constitute a network internal to the major capsid proteins and outside the lipid membrane. The minor capsid proteins glue and stabilize the capsomers. The sequence is that of Minor capsid protein P4 from Chlorella (PBCV-1).